The chain runs to 420 residues: UDP-N-acetylglucosamine 1-carboxyvinyltransferase 1 (420 aa).

Residue 22 to 23 participates in phosphoenolpyruvate binding; the sequence is KN. Residue arginine 91 participates in UDP-N-acetyl-alpha-D-glucosamine binding. Catalysis depends on cysteine 115, which acts as the Proton donor. Cysteine 115 is modified (2-(S-cysteinyl)pyruvic acid O-phosphothioketal). UDP-N-acetyl-alpha-D-glucosamine-binding positions include 120–124, aspartate 303, and valine 325; that span reads RPMDL.

The protein belongs to the EPSP synthase family. MurA subfamily.

It localises to the cytoplasm. It carries out the reaction phosphoenolpyruvate + UDP-N-acetyl-alpha-D-glucosamine = UDP-N-acetyl-3-O-(1-carboxyvinyl)-alpha-D-glucosamine + phosphate. It participates in cell wall biogenesis; peptidoglycan biosynthesis. Its function is as follows. Cell wall formation. Adds enolpyruvyl to UDP-N-acetylglucosamine. The chain is UDP-N-acetylglucosamine 1-carboxyvinyltransferase 1 from Carboxydothermus hydrogenoformans (strain ATCC BAA-161 / DSM 6008 / Z-2901).